Consider the following 648-residue polypeptide: Chaperone protein DnaK (648 aa).

Phosphothreonine; by autocatalysis is present on T200. The segment at 612–631 is disordered; sequence QAGAAGAAGAAEGAAQGGAQ.

Belongs to the heat shock protein 70 family.

Its function is as follows. Acts as a chaperone. The sequence is that of Chaperone protein DnaK from Burkholderia multivorans (strain ATCC 17616 / 249).